The sequence spans 655 residues: Integrin beta-5 (655 aa).

The VWFA domain maps to 1-234 (DLSLSMKDDL…QLIINAYNSI (234 aa)). Residues 1–575 (DLSLSMKDDL…REPECGNTPN (575 aa)) are Extracellular-facing. Residues serine 3 and serine 5 each contribute to the Mg(2+) site. The Ca(2+) site is built by serine 5, aspartate 8, aspartate 9, and aspartate 40. An intrachain disulfide couples cysteine 58 to cysteine 67. Ca(2+)-binding residues include asparagine 98, aspartate 100, proline 102, and glutamate 103. Glutamate 103 lines the Mg(2+) pocket. The cysteines at positions 115 and 156 are disulfide-linked. A glycan (N-linked (GlcNAc...) asparagine) is linked at asparagine 203. Glycine 218 is a binding site for Ca(2+). 13 cysteine pairs are disulfide-bonded: cysteine 257-cysteine 269, cysteine 289-cysteine 317, cysteine 321-cysteine 340, cysteine 332-cysteine 343, cysteine 345-cysteine 354, cysteine 356-cysteine 386, cysteine 369-cysteine 384, cysteine 378-cysteine 389, cysteine 391-cysteine 404, cysteine 406-cysteine 427, cysteine 411-cysteine 425, cysteine 419-cysteine 430, and cysteine 432-cysteine 441. N-linked (GlcNAc...) asparagine glycosylation is present at asparagine 316. I-EGF domains lie at 321-355 (CSVG…TRCE), 356-405 (CQDG…PFCE), 406-442 (CDNF…DNCN), and 443-482 (CSTD…EMCE). An N-linked (GlcNAc...) asparagine glycan is attached at asparagine 408. N-linked (GlcNAc...) asparagine glycosylation occurs at asparagine 442. 9 disulfide bridges follow: cysteine 443–cysteine 466, cysteine 450–cysteine 464, cysteine 458–cysteine 469, cysteine 471–cysteine 481, cysteine 484–cysteine 487, cysteine 491–cysteine 538, cysteine 497–cysteine 517, cysteine 500–cysteine 513, and cysteine 546–cysteine 570. Asparagine 510 and asparagine 561 each carry an N-linked (GlcNAc...) asparagine glycan. A helical transmembrane segment spans residues 576 to 598 (AMTILLAVVGSILLVGLALLAIW). Residues 599-655 (KLLVTIHDRREFAKFQSERSRARYEMASNPLYRKPISTHTVDFTFNKFNKSYNGTVD) lie on the Cytoplasmic side of the membrane. Phosphoserine is present on serine 626.

Belongs to the integrin beta chain family. Heterodimer of an alpha and a beta subunit. Beta-5 (ITGB5) associates with alpha-V (ITGAV). Interacts with MYO10. Interacts with DAB2. Integrin ITGAV:ITGB5 interacts with FBLN5 (via N-terminus). ITGAV:ITGB5 interacts with CCN3. Interacts with tensin TNS3; TNS3 also interacts with PEAK1, thus acting as an adapter molecule to bridge the association of PEAK1 with ITGB5.

It localises to the cell membrane. Its function is as follows. Integrin alpha-V/beta-5 (ITGAV:ITGB5) is a receptor for fibronectin. It recognizes the sequence R-G-D in its ligand. The chain is Integrin beta-5 (ITGB5) from Papio cynocephalus (Yellow baboon).